A 123-amino-acid polypeptide reads, in one-letter code: Ribosome-binding factor A (123 aa).

This sequence belongs to the RbfA family. In terms of assembly, monomer. Binds 30S ribosomal subunits, but not 50S ribosomal subunits or 70S ribosomes.

It is found in the cytoplasm. In terms of biological role, one of several proteins that assist in the late maturation steps of the functional core of the 30S ribosomal subunit. Associates with free 30S ribosomal subunits (but not with 30S subunits that are part of 70S ribosomes or polysomes). Required for efficient processing of 16S rRNA. May interact with the 5'-terminal helix region of 16S rRNA. The polypeptide is Ribosome-binding factor A (Solibacter usitatus (strain Ellin6076)).